We begin with the raw amino-acid sequence, 694 residues long: Elongation factor G (694 aa).

A tr-type G domain is found at 8–282; it reads KDYRNIGIMA…AVIDYLPSPV (275 aa). GTP is bound by residues 17-24, 81-85, and 135-138; these read AHIDAGKT, DTPGH, and NKMD.

The protein belongs to the TRAFAC class translation factor GTPase superfamily. Classic translation factor GTPase family. EF-G/EF-2 subfamily.

It localises to the cytoplasm. Functionally, catalyzes the GTP-dependent ribosomal translocation step during translation elongation. During this step, the ribosome changes from the pre-translocational (PRE) to the post-translocational (POST) state as the newly formed A-site-bound peptidyl-tRNA and P-site-bound deacylated tRNA move to the P and E sites, respectively. Catalyzes the coordinated movement of the two tRNA molecules, the mRNA and conformational changes in the ribosome. The protein is Elongation factor G of Mesomycoplasma hyopneumoniae (strain J / ATCC 25934 / NCTC 10110) (Mycoplasma hyopneumoniae).